Reading from the N-terminus, the 570-residue chain is MRSSKGGRGRQAAPKTAPTTVCYCDGKRELGSVEVVCSTCLKWFHGRCLKEFHELNSNGVPFMICYTFTCKQCRPTAEDWKAKKADLVQMCVTVLATLSAERLKADGKLSAEHVPEDFTYLSLKDEIVPYMNENWYMLTAIKQKKEWHQNLAPTLLKEKNIFVQHNDDDDLFALAEKNLSLLGPLHEAVKLIGKRPIERENREPRHIELPPIEGPKTRGASKRRHAEAPVTGKKQKLAADYSSTAAPNGVQIDIPFSKDNYRYYLTEVDPNVPEDPAWNQNQSSAYVIPSFHYRELLNPTVNVSSNDRAFQLSINGNSITGFEGYSMARASHGVSKGTWYFEVNFDDQPDDSHIRIGWSQSYASLQACVGYNKFSYGWRSKHGTKFHEAKGKKYHFGGFKQGDVLGCLIHLPVDKKLQIPANLPSEKYLPVSHKGFNLISFKANYFFEVQEESADIAKTLVEMPGSYIEFFHNGKSCGKAYENIYAGAYYPSISIFKSATATMNLGPKFRNLPRGATGIHARADEQQHEQTLSDMLYLVSKEVNLDHPPRVKREDDDDVKDIKKEIKQEI.

The PHD-type zinc finger occupies 19-76 (TTVCYCDGKRELGSVEVVCSTCLKWFHGRCLKEFHELNSNGVPFMICYTFTCKQCRPT). The interval 201–242 (NREPRHIELPPIEGPKTRGASKRRHAEAPVTGKKQKLAADYS) is disordered. One can recognise a B30.2/SPRY domain in the interval 270-468 (PNVPEDPAWN…TLVEMPGSYI (199 aa)).

In terms of assembly, component of the SET2 complex (also known as the SET1/COMPASS complex), which contains at least set-2, swd-2.1, cfp-1, rbbp-5, wdr-5.1, dpy-30 and ash-2. Within the complex, interacts with cfp-1 and wdr-5.1. Expressed in somatic and germline tissues (at protein level).

It localises to the nucleus. In terms of biological role, component of the set-2/ash-2 histone methyltransferase (HMT) complex. Required for the di- and trimethylation at 'Lys-4' of histone H3, a mark associated with epigenetic transcriptional activation. Implicated in the epigenetic inheritance of lifespan over several generations. Functions as a transcriptional regulator. Acts in the germline to limit the longevity of the soma, probably by regulating a lipid metabolism pathway that signals from the germline to the intestine, thereby preventing accumulation of mono-unsaturated fatty acids. The sequence is that of Set1/Ash2 histone methyltransferase complex subunit ash-2 from Caenorhabditis elegans.